A 301-amino-acid chain; its full sequence is Ornithine carbamoyltransferase (301 aa).

Carbamoyl phosphate contacts are provided by residues arginine 100 and 127 to 130; that span reads HPCQ. Residues asparagine 158, aspartate 221, and 225 to 226 each bind L-ornithine; that span reads SM. Residues cysteine 260 and arginine 288 each contribute to the carbamoyl phosphate site.

This sequence belongs to the aspartate/ornithine carbamoyltransferase superfamily. OTCase family.

The protein localises to the cytoplasm. It catalyses the reaction carbamoyl phosphate + L-ornithine = L-citrulline + phosphate + H(+). It functions in the pathway amino-acid biosynthesis; L-arginine biosynthesis; L-arginine from L-ornithine and carbamoyl phosphate: step 1/3. Its function is as follows. Reversibly catalyzes the transfer of the carbamoyl group from carbamoyl phosphate (CP) to the N(epsilon) atom of ornithine (ORN) to produce L-citrulline. This is Ornithine carbamoyltransferase (argF) from Vibrio sp. (strain 2693).